A 98-amino-acid chain; its full sequence is IVNTGTVLQVGDGIARIAQIPVSEAYLGRVINALAKPIDGRLIESPAPGIISRASSVAQVVNALQERKFLVELRTQFQEIISSTKLRNQADQTITLIR.

The protein belongs to the ATPase alpha/beta chains family. F-type ATPases have 2 components, CF(1) - the catalytic core - and CF(0) - the membrane proton channel. CF(1) has five subunits: alpha(3), beta(3), gamma(1), delta(1), epsilon(1). CF(0) has four main subunits: a, b, b' and c.

The protein resides in the plastid. It localises to the chloroplast thylakoid membrane. It catalyses the reaction ATP + H2O + 4 H(+)(in) = ADP + phosphate + 5 H(+)(out). In terms of biological role, produces ATP from ADP in the presence of a proton gradient across the membrane. The alpha chain is a regulatory subunit. This is ATP synthase subunit alpha, chloroplastic (atpA) from Populus euphratica (Euphrates poplar).